The sequence spans 348 residues: MSILIDNISKKFGNFQALNHINLEIKSGSIIALLGPSGSGKSTLLRIIAGLDTPDEGTIWISGKNASGYSIQSRNIGFVFQNYALFKNMTVYDNIAFGLELRRISFNDISRKVNKLLELVQLQNLGHRYPAQLSGGQRQRIALARALAIEPKVLLLDEPFGALDARVRKNLRAWLRDLHNKFSITTIIVTHDQQEAMEIADEIVVFNSGRIEQIGKPQDIYDQPATPFVFSLLGYVNKISFDNEIANFLLSSFPEKQSVLMQEKQFYIRPHQIVISKQSNESNYSAKIENLLYIGNWIHLDIYVASFNVNLKVHVSPKEFDNLQLKSFQENIYVSLRSKGKEPIRFLE.

The region spanning 3 to 233 (ILIDNISKKF…PATPFVFSLL (231 aa)) is the ABC transporter domain. 35 to 42 (GPSGSGKS) provides a ligand contact to ATP.

It belongs to the ABC transporter superfamily. Sulfate/tungstate importer (TC 3.A.1.6) family.

It localises to the plastid. Its subcellular location is the chloroplast. It carries out the reaction sulfate(out) + ATP + H2O = sulfate(in) + ADP + phosphate + H(+). The catalysed reaction is thiosulfate(out) + ATP + H2O = thiosulfate(in) + ADP + phosphate + H(+). Part of the ABC transporter complex involved in sulfate/thiosulfate import. Responsible for energy coupling to the transport system. The sequence is that of Sulfate/thiosulfate import ATP-binding protein CysA from Mesostigma viride (Green alga).